Here is a 337-residue protein sequence, read N- to C-terminus: UPF0252 protein PH1321 (337 aa).

The helical transmembrane segment at 100-120 (IIGMLFLVFIILPAITSNLWS) threads the bilayer.

It belongs to the UPF0252 family.

It is found in the membrane. This is UPF0252 protein PH1321 from Pyrococcus horikoshii (strain ATCC 700860 / DSM 12428 / JCM 9974 / NBRC 100139 / OT-3).